Here is a 389-residue protein sequence, read N- to C-terminus: Succinate--CoA ligase [ADP-forming] subunit beta (389 aa).

In terms of domain architecture, ATP-grasp spans 9 to 236 (RDMFEAHGVP…KDSADPLEAK (228 aa)). Residues Lys-45, 52–54 (GRG), Ala-94, and Glu-99 contribute to the ATP site. The Mg(2+) site is built by Asn-191 and Asp-205. Residues Asn-256 and 318 to 320 (GIT) contribute to the substrate site.

It belongs to the succinate/malate CoA ligase beta subunit family. As to quaternary structure, heterotetramer of two alpha and two beta subunits. Mg(2+) is required as a cofactor.

It carries out the reaction succinate + ATP + CoA = succinyl-CoA + ADP + phosphate. The enzyme catalyses GTP + succinate + CoA = succinyl-CoA + GDP + phosphate. It functions in the pathway carbohydrate metabolism; tricarboxylic acid cycle; succinate from succinyl-CoA (ligase route): step 1/1. Functionally, succinyl-CoA synthetase functions in the citric acid cycle (TCA), coupling the hydrolysis of succinyl-CoA to the synthesis of either ATP or GTP and thus represents the only step of substrate-level phosphorylation in the TCA. The beta subunit provides nucleotide specificity of the enzyme and binds the substrate succinate, while the binding sites for coenzyme A and phosphate are found in the alpha subunit. The chain is Succinate--CoA ligase [ADP-forming] subunit beta from Renibacterium salmoninarum (strain ATCC 33209 / DSM 20767 / JCM 11484 / NBRC 15589 / NCIMB 2235).